Here is a 170-residue protein sequence, read N- to C-terminus: NADH-quinone oxidoreductase subunit B (170 aa).

Residues Cys37, Cys38, Cys102, and Cys131 each coordinate [4Fe-4S] cluster.

The protein belongs to the complex I 20 kDa subunit family. As to quaternary structure, NDH-1 is composed of 14 different subunits. Subunits NuoB, C, D, E, F, and G constitute the peripheral sector of the complex. The cofactor is [4Fe-4S] cluster.

Its subcellular location is the cell inner membrane. It catalyses the reaction a quinone + NADH + 5 H(+)(in) = a quinol + NAD(+) + 4 H(+)(out). NDH-1 shuttles electrons from NADH, via FMN and iron-sulfur (Fe-S) centers, to quinones in the respiratory chain. The immediate electron acceptor for the enzyme in this species is believed to be ubiquinone. Couples the redox reaction to proton translocation (for every two electrons transferred, four hydrogen ions are translocated across the cytoplasmic membrane), and thus conserves the redox energy in a proton gradient. In Geobacter metallireducens (strain ATCC 53774 / DSM 7210 / GS-15), this protein is NADH-quinone oxidoreductase subunit B.